The following is a 378-amino-acid chain: Cytochrome b (378 aa).

Transmembrane regions (helical) follow at residues 34-54 (FGSL…FLAM), 78-99 (WLLR…YLHV), 114-134 (WLVG…GYVL), and 179-199 (FFTF…IHIL). Histidine 84 and histidine 98 together coordinate heme b. Heme b-binding residues include histidine 183 and histidine 197. Position 202 (histidine 202) interacts with a ubiquinone. A run of 4 helical transmembrane segments spans residues 227-247 (FKDI…VLIN), 289-309 (LGGV…PFYH), 321-341 (INQI…WIGA), and 348-368 (YVLV…FNPL).

This sequence belongs to the cytochrome b family. In terms of assembly, the main subunits of complex b-c1 are: cytochrome b, cytochrome c1 and the Rieske protein. Heme b serves as cofactor.

Its subcellular location is the mitochondrion inner membrane. Functionally, component of the ubiquinol-cytochrome c reductase complex (complex III or cytochrome b-c1 complex) that is part of the mitochondrial respiratory chain. The b-c1 complex mediates electron transfer from ubiquinol to cytochrome c. Contributes to the generation of a proton gradient across the mitochondrial membrane that is then used for ATP synthesis. This chain is Cytochrome b (MT-CYB), found in Cochliomyia hominivorax (Primary screw-worm).